The primary structure comprises 156 residues: Guanine deaminase (156 aa).

Residues 1-132 (MNHETFLKRA…KPAEERTIPF (132 aa)) form the CMP/dCMP-type deaminase domain. Position 53 (His53) interacts with Zn(2+). The active-site Proton donor is the Glu55. Cys83 and Cys86 together coordinate Zn(2+).

It belongs to the cytidine and deoxycytidylate deaminase family. Zn(2+) is required as a cofactor.

It carries out the reaction guanine + H2O + H(+) = xanthine + NH4(+). Its pathway is purine metabolism; guanine degradation; xanthine from guanine: step 1/1. Its function is as follows. Catalyzes the hydrolytic deamination of guanine, producing xanthine and ammonia. The polypeptide is Guanine deaminase (guaD) (Bacillus subtilis (strain 168)).